The chain runs to 246 residues: 14-3-3 protein eta (246 aa).

Glycine 2 bears the N-acetylglycine mark. A phosphoserine mark is found at serine 25 and serine 59.

The protein belongs to the 14-3-3 family. As to quaternary structure, homodimer. Interacts with many nuclear hormone receptors and cofactors including AR, ESR1, ESR2, MC2R, NR3C1, NRIP1, PPARBP and THRA. Interacts with ABL1 (phosphorylated form); the interaction retains it in the cytoplasm. Interacts with ARHGEF28 and CDK16. Weakly interacts with CDKN1B. Interacts with GAB2. Interacts with KCNK18 in a phosphorylation-dependent manner. Interacts with SAMSN1. Interacts with the 'Ser-241' phosphorylated form of PDPK1. Interacts with the 'Thr-369' phosphorylated form of DAPK2. Interacts with PI4KB, TBC1D22A and TBC1D22B. Interacts with SLITRK1. Interacts with MEFV. Post-translationally, phosphorylated on Ser-59 by protein kinase C delta type catalytic subunit in a sphingosine-dependent fashion. In terms of tissue distribution, expressed mainly in the brain and present in other tissues albeit at lower levels.

In terms of biological role, adapter protein implicated in the regulation of a large spectrum of both general and specialized signaling pathways. Binds to a large number of partners, usually by recognition of a phosphoserine or phosphothreonine motif. Binding generally results in the modulation of the activity of the binding partner. Negatively regulates the kinase activity of PDPK1. In Homo sapiens (Human), this protein is 14-3-3 protein eta (YWHAH).